The primary structure comprises 360 residues: Phenylalanine--tRNA ligase alpha subunit (360 aa).

Glu-260 is a Mg(2+) binding site.

Belongs to the class-II aminoacyl-tRNA synthetase family. Phe-tRNA synthetase alpha subunit type 1 subfamily. Tetramer of two alpha and two beta subunits. The cofactor is Mg(2+).

The protein resides in the cytoplasm. The catalysed reaction is tRNA(Phe) + L-phenylalanine + ATP = L-phenylalanyl-tRNA(Phe) + AMP + diphosphate + H(+). This Rhizobium rhizogenes (strain K84 / ATCC BAA-868) (Agrobacterium radiobacter) protein is Phenylalanine--tRNA ligase alpha subunit.